Here is a 265-residue protein sequence, read N- to C-terminus: tRNA (guanine-N(1)-)-methyltransferase (265 aa).

Residues Gly-119 and 139–144 (IGDYVL) contribute to the S-adenosyl-L-methionine site.

This sequence belongs to the RNA methyltransferase TrmD family. As to quaternary structure, homodimer.

The protein resides in the cytoplasm. It catalyses the reaction guanosine(37) in tRNA + S-adenosyl-L-methionine = N(1)-methylguanosine(37) in tRNA + S-adenosyl-L-homocysteine + H(+). Specifically methylates guanosine-37 in various tRNAs. The polypeptide is tRNA (guanine-N(1)-)-methyltransferase (Alcanivorax borkumensis (strain ATCC 700651 / DSM 11573 / NCIMB 13689 / SK2)).